The chain runs to 403 residues: Probable tRNA sulfurtransferase (403 aa).

Positions 60 to 165 (QLAEERLKPI…KEGVFLSCRT (106 aa)) constitute a THUMP domain. ATP is bound by residues 183 to 184 (ML), 208 to 209 (HF), Arg-265, Gly-287, and Gln-296.

Belongs to the ThiI family.

Its subcellular location is the cytoplasm. The enzyme catalyses [ThiI sulfur-carrier protein]-S-sulfanyl-L-cysteine + a uridine in tRNA + 2 reduced [2Fe-2S]-[ferredoxin] + ATP + H(+) = [ThiI sulfur-carrier protein]-L-cysteine + a 4-thiouridine in tRNA + 2 oxidized [2Fe-2S]-[ferredoxin] + AMP + diphosphate. It catalyses the reaction [ThiS sulfur-carrier protein]-C-terminal Gly-Gly-AMP + S-sulfanyl-L-cysteinyl-[cysteine desulfurase] + AH2 = [ThiS sulfur-carrier protein]-C-terminal-Gly-aminoethanethioate + L-cysteinyl-[cysteine desulfurase] + A + AMP + 2 H(+). The protein operates within cofactor biosynthesis; thiamine diphosphate biosynthesis. In terms of biological role, catalyzes the ATP-dependent transfer of a sulfur to tRNA to produce 4-thiouridine in position 8 of tRNAs, which functions as a near-UV photosensor. Also catalyzes the transfer of sulfur to the sulfur carrier protein ThiS, forming ThiS-thiocarboxylate. This is a step in the synthesis of thiazole, in the thiamine biosynthesis pathway. The sulfur is donated as persulfide by IscS. This is Probable tRNA sulfurtransferase from Listeria monocytogenes serotype 4a (strain HCC23).